A 315-amino-acid chain; its full sequence is Methionyl-tRNA formyltransferase (315 aa).

113–116 (SLLP) is a (6S)-5,6,7,8-tetrahydrofolate binding site.

The protein belongs to the Fmt family.

It catalyses the reaction L-methionyl-tRNA(fMet) + (6R)-10-formyltetrahydrofolate = N-formyl-L-methionyl-tRNA(fMet) + (6S)-5,6,7,8-tetrahydrofolate + H(+). Functionally, attaches a formyl group to the free amino group of methionyl-tRNA(fMet). The formyl group appears to play a dual role in the initiator identity of N-formylmethionyl-tRNA by promoting its recognition by IF2 and preventing the misappropriation of this tRNA by the elongation apparatus. This chain is Methionyl-tRNA formyltransferase, found in Shigella flexneri serotype 5b (strain 8401).